The chain runs to 68 residues: Preprofallaxidin-5 (68 aa).

A signal peptide spans 1–22; sequence MASLKKSLFLVLFLGFVSLSIC. Positions 23 to 51 are excised as a propeptide; sequence EEEKREDKEDEGENEEAEENHEERSEEKR. Residues 24-50 are disordered; the sequence is EEKREDKEDEGENEEAEENHEERSEEK. The segment covering 30 to 42 has biased composition (acidic residues); that stretch reads KEDEGENEEAEEN. Leucine 64 is modified (leucine amide). A propeptide is located at residue serine 68.

Belongs to the frog skin active peptide (FSAP) family. Brevinin subfamily. Expressed by the skin glands.

It is found in the secreted. This chain is Preprofallaxidin-5, found in Litoria fallax (Eastern dwarf tree frog).